The chain runs to 374 residues: UPF0496 protein At3g28270 (374 aa).

Residues 171–210 are a coiled coil; sequence KVLTTQFERIKKQQESLLEEVSETRKKIQDEISNLEKKTL. Transmembrane regions (helical) follow at residues 214–234 and 235–255; these read VVFG…IATG and VGAA…GWAG. The stretch at 256 to 321 forms a coiled coil; that stretch reads VYTTLDKKKD…MLKLVDNAID (66 aa).

It belongs to the UPF0496 family.

Its subcellular location is the membrane. This chain is UPF0496 protein At3g28270, found in Arabidopsis thaliana (Mouse-ear cress).